A 365-amino-acid polypeptide reads, in one-letter code: Isoflavone 4'-O-methyltransferase (365 aa).

S-adenosyl-L-methionine is bound by residues 207–210 (VAGG), D231, 231–232 (DQ), 251–252 (DM), and K265. H269 (proton acceptor) is an active-site residue.

The protein belongs to the class I-like SAM-binding methyltransferase superfamily. Cation-independent O-methyltransferase family. COMT subfamily.

It catalyses the reaction a 4'-hydroxyisoflavone + S-adenosyl-L-methionine = a 4'-methoxyisoflavone + S-adenosyl-L-homocysteine + H(+). It carries out the reaction (2R,3S)-2,4',7-trihydroxyisoflavanone + S-adenosyl-L-methionine = (2R,3S)-2,7-dihydroxy-4'-methoxyisoflavanone + S-adenosyl-L-homocysteine + H(+). In terms of biological role, 2-hydroxyisoflavanone 4'-O-methyltransferase involved in the biosynthesis of formononetin. Can use 2,7,4'-trihydroxyisoflavanone as substrate, but not daidzein. This Lotus japonicus (Lotus corniculatus var. japonicus) protein is Isoflavone 4'-O-methyltransferase (HI4'OMT).